The following is a 1005-amino-acid chain: uncharacterized protein (1005 aa).

Residues 1–24 (MKFQRKYWGLLSTLGVSSAVALSA) form the signal peptide. The N-palmitoyl cysteine moiety is linked to residue cysteine 25. Cysteine 25 is lipidated: S-diacylglycerol cysteine. 2 disordered regions span residues 105-165 (KKDK…EEKF) and 786-825 (TQKIDQQNTASTTSDVTVKKADSSQDSSKSNTEEEKWDDV). Low complexity-rich tracts occupy residues 110–131 (TSSQKTSTNSSCTTTSSGTSTS) and 145–156 (QSSSNGQNNQQS). Residues 786-801 (TQKIDQQNTASTTSDV) show a composition bias toward polar residues.

Its subcellular location is the cell membrane. This is an uncharacterized protein from Mycoplasma pneumoniae (strain ATCC 29342 / M129 / Subtype 1) (Mycoplasmoides pneumoniae).